Reading from the N-terminus, the 406-residue chain is 5-hydroxytryptamine receptor 4 (406 aa).

The Extracellular segment spans residues 1 to 19 (MDRLDANVSSNEGFGSVEK). A glycan (N-linked (GlcNAc...) asparagine) is linked at Asn7. Residues 20-44 (VVLLTFFAMVILMAILGNLLVMVAV) form a helical membrane-spanning segment. The Cytoplasmic segment spans residues 45–54 (CRDRQLRKIK). A helical membrane pass occupies residues 55-78 (TNYFIVSLAFADLLVSVLVNAFGA). Over 79–92 (IELVQDIWFYGEMF) the chain is Extracellular. Residues 93–117 (CLVRTSLDVLLTTASIFHLCCISLD) traverse the membrane as a helical segment. The cysteines at positions 93 and 184 are disulfide-linked. Position 100 (Asp100) interacts with serotonin. The Cytoplasmic portion of the chain corresponds to 118-133 (RYYAICCQPLVYRNKM). A helical transmembrane segment spans residues 134–157 (TPLRIALMLGGCWVIPMFISFLPI). Over 158–188 (MQGWNNIGIVDVIEKRKFNHNSNSTFCVFMV) the chain is Extracellular. The helical transmembrane segment at 189–212 (NKPYAITCSVVAFYIPFLLMVLAY) threads the bilayer. The Cytoplasmic segment spans residues 213–257 (YRIYVTAKEHAQQIQMLQRAGATSESRPQTADQHSTHRMRTETKA). A helical membrane pass occupies residues 258 to 283 (AKTLCVIMGCFCFCWAPFFVTNIVDP). Asn279 serves as a coordination point for serotonin. Topologically, residues 284 to 290 (FIDYTVP) are extracellular. The helical transmembrane segment at 291 to 314 (EKVWTAFLWLGYINSGLNPFLYAF) threads the bilayer. The Cytoplasmic portion of the chain corresponds to 315-406 (LNKSFRRAFL…DSCSLKRSQS (92 aa)).

This sequence belongs to the G-protein coupled receptor 1 family. In terms of assembly, interacts (via C-terminus 330-346 AA) with GRK5; this interaction is promoted by 5-HT (serotonin). As to expression, in brain, isoform 5-HT4S is restricted to the striatum. In peripheral tissues, differential expression is also observed in the atrium of the heart where only isoform 5-HT4S is detectable. In brain, isoform 5-HT4L is expressed throughout the brain, except in the cerebellum.

The protein resides in the cell membrane. Its subcellular location is the endosome membrane. G-protein coupled receptor for 5-hydroxytryptamine (serotonin), a biogenic hormone that functions as a neurotransmitter, a hormone and a mitogen. Ligand binding causes a conformation change that triggers signaling via guanine nucleotide-binding proteins (G proteins) and modulates the activity of downstream effectors. HTR4 is coupled to G(s) G alpha proteins and mediates activation of adenylate cyclase activity. The sequence is that of 5-hydroxytryptamine receptor 4 (Htr4) from Rattus norvegicus (Rat).